The sequence spans 258 residues: Apolipoprotein E (258 aa).

The first 19 residues, 1-19, serve as a signal peptide directing secretion; the sequence is MRVWTVLLGAVLLLAACQA. 3 consecutive repeat copies span residues 112–133, 134–155, and 156–173. Residues 112 to 173 are 3 X 22 AA approximate tandem repeats; it reads VDMEEAKTRV…KLEAYSKEAT (62 aa).

This sequence belongs to the apolipoprotein A1/A4/E family. In terms of assembly, homotetramer.

Its subcellular location is the secreted. The protein resides in the extracellular space. The protein localises to the extracellular matrix. APOE is an apolipoprotein, a protein associating with lipid particles, that mainly functions in lipoprotein-mediated lipid transport between organs via the plasma and interstitial fluids. APOE is a core component of plasma lipoproteins and is involved in their production, conversion and clearance. Apolipoproteins are amphipathic molecules that interact both with lipids of the lipoprotein particle core and the aqueous environment of the plasma. The protein is Apolipoprotein E (APOE) of Alligator mississippiensis (American alligator).